A 179-amino-acid polypeptide reads, in one-letter code: ATP synthase subunit delta (179 aa).

This sequence belongs to the ATPase delta chain family. As to quaternary structure, F-type ATPases have 2 components, F(1) - the catalytic core - and F(0) - the membrane proton channel. F(1) has five subunits: alpha(3), beta(3), gamma(1), delta(1), epsilon(1). F(0) has three main subunits: a(1), b(2) and c(10-14). The alpha and beta chains form an alternating ring which encloses part of the gamma chain. F(1) is attached to F(0) by a central stalk formed by the gamma and epsilon chains, while a peripheral stalk is formed by the delta and b chains.

The protein resides in the cell membrane. Its function is as follows. F(1)F(0) ATP synthase produces ATP from ADP in the presence of a proton or sodium gradient. F-type ATPases consist of two structural domains, F(1) containing the extramembraneous catalytic core and F(0) containing the membrane proton channel, linked together by a central stalk and a peripheral stalk. During catalysis, ATP synthesis in the catalytic domain of F(1) is coupled via a rotary mechanism of the central stalk subunits to proton translocation. Functionally, this protein is part of the stalk that links CF(0) to CF(1). It either transmits conformational changes from CF(0) to CF(1) or is implicated in proton conduction. This chain is ATP synthase subunit delta, found in Clostridium botulinum (strain ATCC 19397 / Type A).